Reading from the N-terminus, the 98-residue chain is NADH-ubiquinone oxidoreductase chain 4L (98 aa).

3 helical membrane passes run 1-21 (MSLAHINIFLAFTVSLVGLLM), 25-45 (HLMSSLLCLEGMMLSLFVMAT), and 59-81 (MPIILLVFAACERALGLSLLVMV).

The protein belongs to the complex I subunit 4L family. As to quaternary structure, core subunit of respiratory chain NADH dehydrogenase (Complex I) which is composed of 45 different subunits.

The protein localises to the mitochondrion inner membrane. The catalysed reaction is a ubiquinone + NADH + 5 H(+)(in) = a ubiquinol + NAD(+) + 4 H(+)(out). In terms of biological role, core subunit of the mitochondrial membrane respiratory chain NADH dehydrogenase (Complex I) which catalyzes electron transfer from NADH through the respiratory chain, using ubiquinone as an electron acceptor. Part of the enzyme membrane arm which is embedded in the lipid bilayer and involved in proton translocation. This chain is NADH-ubiquinone oxidoreductase chain 4L (MT-ND4L), found in Equus asinus (Donkey).